The sequence spans 196 residues: MNIVIIDTNCSNLLSVKTMLHRLGHNPIISDRADVISQADKLFLPGVGTASSAMKQLKKKNLITLIQNCTKPILGICLGMQLFGSISSENNGVNTLNIIHTPVKRMQYHGFPLPHMGWNTITIPKKHFLFYGIKENDYFYFAHSYCIKVCSVTISQTNYGQLFSSVIKYKNFFGVQFHPEKSGMPGQQLVKNFLEI.

One can recognise a Glutamine amidotransferase type-1 domain in the interval 2–196; it reads NIVIIDTNCS…QQLVKNFLEI (195 aa). C77 acts as the Nucleophile in catalysis. Catalysis depends on residues H178 and E180.

Heterodimer of HisH and HisF.

The protein resides in the cytoplasm. The catalysed reaction is 5-[(5-phospho-1-deoxy-D-ribulos-1-ylimino)methylamino]-1-(5-phospho-beta-D-ribosyl)imidazole-4-carboxamide + L-glutamine = D-erythro-1-(imidazol-4-yl)glycerol 3-phosphate + 5-amino-1-(5-phospho-beta-D-ribosyl)imidazole-4-carboxamide + L-glutamate + H(+). The enzyme catalyses L-glutamine + H2O = L-glutamate + NH4(+). Its pathway is amino-acid biosynthesis; L-histidine biosynthesis; L-histidine from 5-phospho-alpha-D-ribose 1-diphosphate: step 5/9. Its function is as follows. IGPS catalyzes the conversion of PRFAR and glutamine to IGP, AICAR and glutamate. The HisH subunit catalyzes the hydrolysis of glutamine to glutamate and ammonia as part of the synthesis of IGP and AICAR. The resulting ammonia molecule is channeled to the active site of HisF. In Blochmanniella pennsylvanica (strain BPEN), this protein is Imidazole glycerol phosphate synthase subunit HisH.